The chain runs to 208 residues: FMN-dependent NADH:quinone oxidoreductase 1 (208 aa).

An FMN-binding site is contributed by serine 10.

Belongs to the azoreductase type 1 family. Homodimer. FMN serves as cofactor.

The enzyme catalyses 2 a quinone + NADH + H(+) = 2 a 1,4-benzosemiquinone + NAD(+). It carries out the reaction N,N-dimethyl-1,4-phenylenediamine + anthranilate + 2 NAD(+) = 2-(4-dimethylaminophenyl)diazenylbenzoate + 2 NADH + 2 H(+). In terms of biological role, quinone reductase that provides resistance to thiol-specific stress caused by electrophilic quinones. Contributes to resistance to 2-methylhydroquinone (2-MHQ) and catechol. Its function is as follows. Also exhibits azoreductase activity. Catalyzes the reductive cleavage of the azo bond in aromatic azo compounds to the corresponding amines. This is FMN-dependent NADH:quinone oxidoreductase 1 from Bacillus subtilis (strain 168).